The chain runs to 1123 residues: Polyprotein of EF-Ts, chloroplastic (1123 aa).

A chloroplast-targeting transit peptide spans 1-73 (MTPVVHCSVG…SSARRPRTLS (73 aa)). The tract at residues 68–141 (RPRTLSAATV…MPPLNDEDLV (74 aa)) is disordered. A compositionally biased stretch (acidic residues) spans 94–103 (TSEESSEDTA). The span at 106-119 (TAEASEQAEASTSS) shows a compositional bias: low complexity. The 70-residue stretch at 143–212 (GASFTGKVRS…ETGRISLTMR (70 aa)) folds into the S1 motif 1 domain. The segment at 213–258 (TGGDYVKPKTETPKAASGGRNTTATTSRGSPRQTRERDEAKSMGET) is disordered. Residues 231 to 244 (GRNTTATTSRGSPR) are compositionally biased toward polar residues. A compositionally biased stretch (basic and acidic residues) spans 245–254 (QTRERDEAKS). Positions 263–331 (GQFLDGVVKN…VRGQVTLTMK (69 aa)) constitute an S1 motif 2 domain. Disordered stretches follow at residues 443 to 670 (KTES…SEKT) and 894 to 923 (VAAQ…EEKK). Residues 486–501 (EGSVTTEPTEAASTEF) show a composition bias toward polar residues. The segment covering 551–587 (SVASTESVTAVVEESAPVSSVAIEVPAPEASEASAQE) has biased composition (low complexity). Over residues 630 to 639 (KPDEPEESLI) the composition is skewed to acidic residues. Composition is skewed to low complexity over residues 657-670 (AAVP…SEKT) and 894-903 (VAAQTAAKAP). Positions 908–923 (PKDDKPEETAETEEKK) are enriched in basic and acidic residues.

Belongs to the EF-Ts family. As to quaternary structure, component of the chloroplast ribosome 30S and 70S subunits, as well as polysomes. Component of the chloroplast ribosome 70S subunit, and at low levels, present in polysomes. In terms of assembly, associates transiently with chloroplast polysomes.

The protein localises to the plastid. The protein resides in the chloroplast. Functionally, associates with the EF-Tu.GDP complex and induces the exchange of GDP to GTP. It remains bound to the aminoacyl-tRNA.EF-Tu.GTP complex up to the GTP hydrolysis stage on the ribosome. Binds to psbD and psbA 5'-untranslated regions (UTRs) in vitro. This Oryza sativa subsp. indica (Rice) protein is Polyprotein of EF-Ts, chloroplastic.